Consider the following 230-residue polypeptide: Type 4 apparatus protein DotY (230 aa).

Residues Glu-202–Arg-230 form a disordered region. A compositionally biased stretch (basic and acidic residues) spans Lys-204 to Ile-217.

As to quaternary structure, the T4BSS is a complex nanomachine composed of several subcomplexes. This subunit is part of the Type IV Coupling Complex (T4CC), a subcomplex composed of the DotLMNYZ core and the IcmSW-LvgA adapter subunits, linked by the C-terminal tail of DotL. Six DotLMNYZ hetero-pentameric units may assemble into a hexameric nanomachine, forming an inner membrane channel for effectors to pass through. Interacts exclusively with DotZ. DotY and DotZ are co-dependent for the assembly into the T4CC.

It localises to the cytoplasm. Functionally, component of the Dot/Icm type IVB secretion system (T4BSS), which is used to inject bacterial effector proteins into eukaryotic host cells. Part of a subcomplex which recruits effector proteins and delivers them to the core transmembrane subcomplex. DotY and DotZ play a role in effector translocation, but are not essential and do not influence the stability of the subcomplex main components. The DotY/DotZ main function is to optimize secretion by modulating the delivery trajectory of the IcmSW module and the localization of the machinery to the poles. This chain is Type 4 apparatus protein DotY, found in Legionella pneumophila subsp. pneumophila (strain Philadelphia 1 / ATCC 33152 / DSM 7513).